The following is a 195-amino-acid chain: Peptide methionine sulfoxide reductase MsrA 2 (195 aa).

The active site involves Cys-18.

It belongs to the MsrA Met sulfoxide reductase family.

It carries out the reaction L-methionyl-[protein] + [thioredoxin]-disulfide + H2O = L-methionyl-(S)-S-oxide-[protein] + [thioredoxin]-dithiol. The catalysed reaction is [thioredoxin]-disulfide + L-methionine + H2O = L-methionine (S)-S-oxide + [thioredoxin]-dithiol. Its function is as follows. Has an important function as a repair enzyme for proteins that have been inactivated by oxidation. Catalyzes the reversible oxidation-reduction of methionine sulfoxide in proteins to methionine. In Mesorhizobium japonicum (strain LMG 29417 / CECT 9101 / MAFF 303099) (Mesorhizobium loti (strain MAFF 303099)), this protein is Peptide methionine sulfoxide reductase MsrA 2 (msrA2).